Reading from the N-terminus, the 141-residue chain is Flagellar assembly factor FliW 1 (141 aa).

The protein belongs to the FliW family. As to quaternary structure, interacts with translational regulator CsrA and flagellin(s).

Its subcellular location is the cytoplasm. Acts as an anti-CsrA protein, binds CsrA and prevents it from repressing translation of its target genes, one of which is flagellin. Binds to flagellin and participates in the assembly of the flagellum. The protein is Flagellar assembly factor FliW 1 of Desulfotalea psychrophila (strain LSv54 / DSM 12343).